The primary structure comprises 415 residues: Heterogeneous nuclear ribonucleoprotein F (415 aa).

Position 1 is an N-acetylmethionine (Met1). The residue at position 2 (Met2) is an N-acetylmethionine; in Heterogeneous nuclear ribonucleoprotein F, N-terminally processed. The RRM 1 domain maps to 11–90 (YVVKLRGLPW…RYIEVFKSHR (80 aa)). A Glycyl lysine isopeptide (Lys-Gly) (interchain with G-Cter in SUMO) cross-link involves residue Lys72. The interval 81–86 (RYIEVF) is interaction with RNA. Lys87 is covalently cross-linked (Glycyl lysine isopeptide (Lys-Gly) (interchain with G-Cter in SUMO2)). 3 positions are modified to phosphoserine: Ser104, Ser107, and Ser161. Positions 111–188 (GFVRLRGLPF…RYIEVFKSSQ (78 aa)) constitute an RRM 2 domain. Residue Lys167 forms a Glycyl lysine isopeptide (Lys-Gly) (interchain with G-Cter in SUMO2) linkage. The interaction with RNA stretch occupies residues 179–184 (RYIEVF). Lys185 is covalently cross-linked (Glycyl lysine isopeptide (Lys-Gly) (interchain with G-Cter in SUMO2)). Phosphoserine occurs at positions 187, 193, and 195. Residue Lys200 is modified to N6-acetyllysine; alternate. Lys200 is covalently cross-linked (Glycyl lysine isopeptide (Lys-Gly) (interchain with G-Cter in SUMO2); alternate). The residue at position 215 (Thr215) is a Phosphothreonine. N6-acetyllysine; alternate is present on Lys224. Lys224 is covalently cross-linked (Glycyl lysine isopeptide (Lys-Gly) (interchain with G-Cter in SUMO2); alternate). Ser265 carries the phosphoserine modification. The RRM 3 domain maps to 289-366 (HCVHMRGLPY…IELFLNSTTG (78 aa)). An interaction with RNA region spans residues 355–360 (RYIELF).

In terms of assembly, identified in the spliceosome C complex. Interacts with AGO1, AGO2, TBP and TXNL4/DIM1. Sumoylated.

The protein resides in the nucleus. It localises to the nucleoplasm. Component of the heterogeneous nuclear ribonucleoprotein (hnRNP) complexes which provide the substrate for the processing events that pre-mRNAs undergo before becoming functional, translatable mRNAs in the cytoplasm. Plays a role in the regulation of alternative splicing events. Binds G-rich sequences in pre-mRNAs and keeps target RNA in an unfolded state. The sequence is that of Heterogeneous nuclear ribonucleoprotein F (Hnrnpf) from Mus musculus (Mouse).